We begin with the raw amino-acid sequence, 303 residues long: Ferrochelatase (303 aa).

Positions 185 and 262 each coordinate Fe cation.

It belongs to the ferrochelatase family.

Its subcellular location is the cytoplasm. It catalyses the reaction heme b + 2 H(+) = protoporphyrin IX + Fe(2+). It functions in the pathway porphyrin-containing compound metabolism; protoheme biosynthesis; protoheme from protoporphyrin-IX: step 1/1. Its function is as follows. Catalyzes the ferrous insertion into protoporphyrin IX. This Campylobacter jejuni (strain RM1221) protein is Ferrochelatase.